The chain runs to 276 residues: MLVNFSKMHGLGNDFVVIDNITQNVFLSRDQIIKLADRHFGIGFDQLLMVEAPYSPDLDFHYRIFNADGTEVEQCGNGARCFARFVRMKGLTNKHKITVSTKSGNLTLYIEKDGQVTVNMGHPNFEPSKIPLKATKRELTYIIRTEEHTVFSGAVSMGNPHCVLEVDDITTAQVDILGPLLENHERFPQRANIGFMQVISKEHIKLRVWERGVNETLACGTGACAAMVIGFIQNKLISTVQVDLPGGSLQIRWNGEGHPVRMTGPAEHVFDGQVAL.

N13, Q46, and N66 together coordinate substrate. The active-site Proton donor is C75. Substrate-binding positions include 76–77 (GN), N159, N192, and 210–211 (ER). The active-site Proton acceptor is C219. 220-221 (GT) serves as a coordination point for substrate.

This sequence belongs to the diaminopimelate epimerase family. As to quaternary structure, homodimer.

The protein localises to the cytoplasm. It catalyses the reaction (2S,6S)-2,6-diaminopimelate = meso-2,6-diaminopimelate. It participates in amino-acid biosynthesis; L-lysine biosynthesis via DAP pathway; DL-2,6-diaminopimelate from LL-2,6-diaminopimelate: step 1/1. In terms of biological role, catalyzes the stereoinversion of LL-2,6-diaminopimelate (L,L-DAP) to meso-diaminopimelate (meso-DAP), a precursor of L-lysine and an essential component of the bacterial peptidoglycan. The polypeptide is Diaminopimelate epimerase (Pseudoalteromonas translucida (strain TAC 125)).